The primary structure comprises 692 residues: Chaperone protein dnaK1 (692 aa).

A Phosphothreonine; by autocatalysis modification is found at Thr-197.

This sequence belongs to the heat shock protein 70 family.

Functionally, acts as a chaperone. This is Chaperone protein dnaK1 (dnaK1) from Synechocystis sp. (strain ATCC 27184 / PCC 6803 / Kazusa).